A 399-amino-acid polypeptide reads, in one-letter code: 1-deoxy-D-xylulose 5-phosphate reductoisomerase (399 aa).

Residues Thr16, Gly17, Ser18, Ile19, Gly42, Arg43, Asn44, and Asn127 each contribute to the NADPH site. Lys128 contributes to the 1-deoxy-D-xylulose 5-phosphate binding site. Residue Glu129 coordinates NADPH. Residue Asp153 coordinates Mn(2+). The 1-deoxy-D-xylulose 5-phosphate site is built by Ser154, Glu155, Ser179, and His202. Glu155 contributes to the Mn(2+) binding site. Gly208 serves as a coordination point for NADPH. Residues Ser215, Asn220, Lys221, and Glu224 each contribute to the 1-deoxy-D-xylulose 5-phosphate site. Glu224 provides a ligand contact to Mn(2+).

This sequence belongs to the DXR family. The cofactor is Mg(2+). Requires Mn(2+) as cofactor.

It catalyses the reaction 2-C-methyl-D-erythritol 4-phosphate + NADP(+) = 1-deoxy-D-xylulose 5-phosphate + NADPH + H(+). It functions in the pathway isoprenoid biosynthesis; isopentenyl diphosphate biosynthesis via DXP pathway; isopentenyl diphosphate from 1-deoxy-D-xylulose 5-phosphate: step 1/6. Functionally, catalyzes the NADPH-dependent rearrangement and reduction of 1-deoxy-D-xylulose-5-phosphate (DXP) to 2-C-methyl-D-erythritol 4-phosphate (MEP). This is 1-deoxy-D-xylulose 5-phosphate reductoisomerase from Caulobacter vibrioides (strain NA1000 / CB15N) (Caulobacter crescentus).